Consider the following 88-residue polypeptide: Molybdopterin synthase sulfur carrier subunit (88 aa).

Position 88 is a 1-thioglycine; alternate (G88). At G88 the chain carries Glycyl adenylate; alternate.

This sequence belongs to the MoaD family. MOCS2A subfamily. In terms of assembly, heterotetramer; composed of 2 small (MOCS2A) and 2 large (MOCS2B) subunits. Post-translationally, C-terminal thiocarboxylation occurs in 2 steps, it is first acyl-adenylated (-COAMP) via the hesA/moeB/thiF part of MOCS3, then thiocarboxylated (-COSH) via the rhodanese domain of MOCS3.

The protein resides in the cytoplasm. Its subcellular location is the cytosol. It participates in cofactor biosynthesis; molybdopterin biosynthesis. Acts as a sulfur carrier required for molybdopterin biosynthesis. Component of the molybdopterin synthase complex that catalyzes the conversion of precursor Z into molybdopterin by mediating the incorporation of 2 sulfur atoms into precursor Z to generate a dithiolene group. In the complex, serves as sulfur donor by being thiocarboxylated (-COSH) at its C-terminus by MOCS3. After interaction with MOCS2B, the sulfur is then transferred to precursor Z to form molybdopterin. This Mus musculus (Mouse) protein is Molybdopterin synthase sulfur carrier subunit.